Consider the following 223-residue polypeptide: UPF0502 protein Sbal223_2520 (223 aa).

The protein belongs to the UPF0502 family.

The protein is UPF0502 protein Sbal223_2520 of Shewanella baltica (strain OS223).